We begin with the raw amino-acid sequence, 135 residues long: Interleukin-4 (135 aa).

The signal sequence occupies residues 1 to 24 (MGLTSQLIPVLVCLLVCTSHFVHG). Intrachain disulfides connect Cys27-Cys135, Cys48-Cys85, and Cys70-Cys105. Asn62 carries an N-linked (GlcNAc...) asparagine glycan.

It belongs to the IL-4/IL-13 family.

The protein resides in the secreted. In terms of biological role, participates in at least several B-cell activation processes as well as of other cell types. It is a costimulator of DNA-synthesis. It induces the expression of class II MHC molecules on resting B-cells. It enhances both secretion and cell surface expression of IgE and IgG1. It also regulates the expression of the low affinity Fc receptor for IgE (CD23) on both lymphocytes and monocytes. Positively regulates IL31RA expression in macrophages. Stimulates autophagy in dendritic cells by interfering with mTORC1 signaling and through the induction of RUFY4. The polypeptide is Interleukin-4 (IL4) (Bos taurus (Bovine)).